The chain runs to 320 residues: Cyclin-H (320 aa).

Ser-5 is subject to Phosphoserine; by CDK8. Ser-132 carries the phosphoserine modification. Ser-304 is subject to Phosphoserine; by CDK8.

It belongs to the cyclin family. Cyclin C subfamily. In terms of assembly, associates primarily with CDK7 and MAT1 to form the CAK complex. CAK can further associate with the core-TFIIH to form the TFIIH basal transcription factor.

The protein localises to the nucleus. Its function is as follows. Regulates CDK7, the catalytic subunit of the CDK-activating kinase (CAK) enzymatic complex. CAK activates the cyclin-associated kinases CDK1, CDK2, CDK4 and CDK6 by threonine phosphorylation. CAK complexed to the core-TFIIH basal transcription factor activates RNA polymerase II by serine phosphorylation of the repetitive C-terminal domain (CTD) of its large subunit (POLR2A), allowing its escape from the promoter and elongation of the transcripts. Involved in cell cycle control and in RNA transcription by RNA polymerase II. Its expression and activity are constant throughout the cell cycle. In Bos taurus (Bovine), this protein is Cyclin-H (CCNH).